We begin with the raw amino-acid sequence, 187 residues long: Elongation factor P (187 aa).

Belongs to the elongation factor P family.

It localises to the cytoplasm. It functions in the pathway protein biosynthesis; polypeptide chain elongation. Functionally, involved in peptide bond synthesis. Stimulates efficient translation and peptide-bond synthesis on native or reconstituted 70S ribosomes in vitro. Probably functions indirectly by altering the affinity of the ribosome for aminoacyl-tRNA, thus increasing their reactivity as acceptors for peptidyl transferase. This is Elongation factor P from Desulfosudis oleivorans (strain DSM 6200 / JCM 39069 / Hxd3) (Desulfococcus oleovorans).